The following is a 706-amino-acid chain: Ribosomal RNA large subunit methyltransferase K/L (706 aa).

A THUMP domain is found at 43–154 (LMYQSLLWSR…RDMASVALDL (112 aa)).

The protein belongs to the methyltransferase superfamily. RlmKL family.

The protein localises to the cytoplasm. The catalysed reaction is guanosine(2445) in 23S rRNA + S-adenosyl-L-methionine = N(2)-methylguanosine(2445) in 23S rRNA + S-adenosyl-L-homocysteine + H(+). It carries out the reaction guanosine(2069) in 23S rRNA + S-adenosyl-L-methionine = N(2)-methylguanosine(2069) in 23S rRNA + S-adenosyl-L-homocysteine + H(+). In terms of biological role, specifically methylates the guanine in position 2445 (m2G2445) and the guanine in position 2069 (m7G2069) of 23S rRNA. The polypeptide is Ribosomal RNA large subunit methyltransferase K/L (Yersinia enterocolitica serotype O:8 / biotype 1B (strain NCTC 13174 / 8081)).